The primary structure comprises 845 residues: MADSPFPRSSRSGLLRTTLNSSMPPQNLSHSLLILEKSNAEQNELSLMEDTGDDLDRGKSRMDVLFPQFFDVLQAQGNGQEAFEVIQSLTQVCRGVVEQLELEIDHGMGGEQGARQRESMLTWLRQEINTWRLLHALFYDRILLQTDRQADDEMQDGPTLGGSEKEVIQQLYALNATLREYQLVVDWLEACYDRGEQQNPLHAHDRMMAWENTLFQLENLQGAAFGKGHKIVTRLDPDAPVREKRPLHALDEEDNLRLSRAIFELIRAGRVDDGLKLCKHFGQTWRAAILEGWRLHEDPNFEQNVSVLHEKLPIEGNPRRDIWKRCAWMLADSKNYDEYSRATAGVFSGHLGSLKTLLHSNWHDLLWAHLKVQIDIRVESEIRGCCLKNYQPMPDDYWNGRMTMEQIFEELNVAKDASVRDFAQSQLGIIQRHLILDTCGELIQHMVRWVEKDTSQQSPHQLRFMAHIVLFLRQIGRVEQERQAEKIVAAYVEALIARGEPQLIAYYTASLSNPLQVQLYSRFLEQVEQKRPRELAVDAALQAGLDVEQITRVTVQNIRLAHQPLGEFGEPQSGEISAIDQRKISALEWLIHLPEQRGELLWQANAMIRTYLASSKVECMRQTFRMVPADIVQQLVSLYGSVDNIPPREECCLKEYLCYKAYLSGVDSFVEWNRLQQNRPKKPQTSHAASSQDNFTERMASERKEQAHRSEVVRWEHKVKEQAKQTIELLYNVLMFPDKGWLVDPFIAKLPENAVQLSWDHRLLQMEKLRSICIPEIALFLNEVMFKSGDFAGCVRLADEISSENRQLYKVYTKHKLAELLAKIADASLELLNSKLDPWGYPITT.

Disordered stretches follow at residues 1-26 and 677-702; these read MADS…MPPQ and QNRP…MASE. Composition is skewed to polar residues over residues 7–26 and 685–694; these read PRSS…MPPQ and TSHAASSQDN.

Belongs to the nucleoporin Nup84/Nup107 family. In terms of assembly, part of the nuclear pore complex (NPC). As to expression, expressed in spermatocytes (at protein level).

The protein resides in the nucleus. Its subcellular location is the nuclear pore complex. It is found in the nucleus envelope. It localises to the nucleus membrane. The protein localises to the cytoplasm. The protein resides in the cytoskeleton. Its subcellular location is the spindle. It is found in the chromosome. It localises to the nucleus matrix. Its function is as follows. Plays a role in nuclear pore complex (NPC) assembly and maintenance. Required for nuclear import of Mad. Mediates the association between the nuclear pore complex and a subset of active chromatin regions adjacent to lamin-associated domains. Plays a role in double strand break repair by relocalizing the heterochromatic double strand breaks (DSBs) to the nuclear periphery as part of the homologous recombination (HR) repair process. Regulates cytokinesis during spermatocyte meiosis by maintaining type-B lamin Lam localization to the spindle envelope. Regulates female gonad development and oogenesis. In Drosophila melanogaster (Fruit fly), this protein is Nuclear pore complex protein Nup107.